A 447-amino-acid chain; its full sequence is Bifunctional protein GlmU (447 aa).

A pyrophosphorylase region spans residues 1 to 225; that stretch reads MLTVAILAAG…NGELQGINNR (225 aa). UDP-N-acetyl-alpha-D-glucosamine is bound by residues 7–10, K21, Q73, and 78–79; these read LAAG and GT. D103 lines the Mg(2+) pocket. The UDP-N-acetyl-alpha-D-glucosamine site is built by G140, E154, N169, and N223. N223 is a binding site for Mg(2+). The interval 226 to 246 is linker; that stretch reads VQLSKCEETIQNLIKEKHMLG. The tract at residues 247-447 is N-acetyltransferase; the sequence is GVTFINPASC…QVNIENWKKN (201 aa). Residues R328 and K346 each coordinate UDP-N-acetyl-alpha-D-glucosamine. The active-site Proton acceptor is the H358. Residues Y361 and N372 each coordinate UDP-N-acetyl-alpha-D-glucosamine. Residues A375, A418, and R435 each coordinate acetyl-CoA.

It in the N-terminal section; belongs to the N-acetylglucosamine-1-phosphate uridyltransferase family. This sequence in the C-terminal section; belongs to the transferase hexapeptide repeat family. In terms of assembly, homotrimer. It depends on Mg(2+) as a cofactor.

It localises to the cytoplasm. The enzyme catalyses alpha-D-glucosamine 1-phosphate + acetyl-CoA = N-acetyl-alpha-D-glucosamine 1-phosphate + CoA + H(+). The catalysed reaction is N-acetyl-alpha-D-glucosamine 1-phosphate + UTP + H(+) = UDP-N-acetyl-alpha-D-glucosamine + diphosphate. The protein operates within nucleotide-sugar biosynthesis; UDP-N-acetyl-alpha-D-glucosamine biosynthesis; N-acetyl-alpha-D-glucosamine 1-phosphate from alpha-D-glucosamine 6-phosphate (route II): step 2/2. It participates in nucleotide-sugar biosynthesis; UDP-N-acetyl-alpha-D-glucosamine biosynthesis; UDP-N-acetyl-alpha-D-glucosamine from N-acetyl-alpha-D-glucosamine 1-phosphate: step 1/1. It functions in the pathway bacterial outer membrane biogenesis; LPS lipid A biosynthesis. Its function is as follows. Catalyzes the last two sequential reactions in the de novo biosynthetic pathway for UDP-N-acetylglucosamine (UDP-GlcNAc). The C-terminal domain catalyzes the transfer of acetyl group from acetyl coenzyme A to glucosamine-1-phosphate (GlcN-1-P) to produce N-acetylglucosamine-1-phosphate (GlcNAc-1-P), which is converted into UDP-GlcNAc by the transfer of uridine 5-monophosphate (from uridine 5-triphosphate), a reaction catalyzed by the N-terminal domain. This Prochlorococcus marinus (strain MIT 9515) protein is Bifunctional protein GlmU.